We begin with the raw amino-acid sequence, 315 residues long: 2-oxoglutarate and iron-dependent oxygenase domain-containing protein 3 (315 aa).

Residues 1 to 32 form a disordered region; that stretch reads MAPQRRGPPRVPEGNSAAERRHANSTKKDRLP. Topologically, residues 1–41 are cytoplasmic; sequence MAPQRRGPPRVPEGNSAAERRHANSTKKDRLPQEAQRTWLR. Residues 18–32 are compositionally biased toward basic and acidic residues; that stretch reads AERRHANSTKKDRLP. The helical; Signal-anchor for type II membrane protein transmembrane segment at 42 to 62 threads the bilayer; that stretch reads IVALGVSLALVTFLLWSSAGI. At 63–315 the chain is on the lumenal side; it reads DDDVAEVVAH…DHGIEDPVLT (253 aa). Positions 203–305 constitute a Fe2OG dioxygenase domain; the sequence is KPTFFSRINS…AITIAFTCNP (103 aa). A glycan (N-linked (GlcNAc...) asparagine) is linked at Asn211. Fe cation contacts are provided by His226 and Asp228. N-linked (GlcNAc...) asparagine glycosylation is present at Asn263. His284 serves as a coordination point for Fe cation. Arg294 is a catalytic residue. Position 294 (Arg294) interacts with 2-oxoglutarate.

The protein belongs to the OGFOD3 family. Requires Fe(2+) as cofactor. It depends on L-ascorbate as a cofactor.

The protein localises to the membrane. The polypeptide is 2-oxoglutarate and iron-dependent oxygenase domain-containing protein 3 (Ogfod3) (Rattus norvegicus (Rat)).